Consider the following 166-residue polypeptide: Biotin carboxyl carrier protein of acetyl-CoA carboxylase (166 aa).

Over residues 61-70 the composition is skewed to polar residues; sequence STASEASSPA. The segment at 61–82 is disordered; it reads STASEASSPASVKDVPVEEQPQ. The Biotinyl-binding domain occupies 90-166; that stretch reads GDIVESPLVG…EFGQGLVRIK (77 aa). Residue Lys-132 is modified to N6-biotinyllysine.

As to quaternary structure, homodimer.

It participates in lipid metabolism; fatty acid biosynthesis. Its function is as follows. This protein is a component of the acetyl coenzyme A carboxylase complex; first, biotin carboxylase catalyzes the carboxylation of the carrier protein and then the transcarboxylase transfers the carboxyl group to form malonyl-CoA. This is Biotin carboxyl carrier protein of acetyl-CoA carboxylase from Streptococcus pyogenes serotype M6 (strain ATCC BAA-946 / MGAS10394).